The primary structure comprises 228 residues: Ribose-5-phosphate isomerase A (228 aa).

Substrate contacts are provided by residues 32 to 35 (TGST), 85 to 88 (DGAD), and 98 to 101 (KGGG). Residue Glu107 is the Proton acceptor of the active site. Residue Lys125 coordinates substrate.

This sequence belongs to the ribose 5-phosphate isomerase family. Homodimer.

The catalysed reaction is aldehydo-D-ribose 5-phosphate = D-ribulose 5-phosphate. It functions in the pathway carbohydrate degradation; pentose phosphate pathway; D-ribose 5-phosphate from D-ribulose 5-phosphate (non-oxidative stage): step 1/1. In terms of biological role, catalyzes the reversible conversion of ribose-5-phosphate to ribulose 5-phosphate. This Ralstonia nicotianae (strain ATCC BAA-1114 / GMI1000) (Ralstonia solanacearum) protein is Ribose-5-phosphate isomerase A.